The sequence spans 1308 residues: Tau-tubulin kinase 1 (1308 aa).

One can recognise a Protein kinase domain in the interval 34-297 (WKVLKKIGGG…LIMSVFENSM (264 aa)). ATP is bound by residues 40–48 (IGGGGFGEI) and K63. D154 functions as the Proton acceptor in the catalytic mechanism. Disordered stretches follow at residues 364-397 (LSDQENAPPILPGRPPEGLGPGPHLVPHPGGPEA), 418-448 (PCVEEEQSRGVGVPSSPVRAPPDSPTTPVRS), 474-671 (ERRS…APPF), 720-899 (QVPL…AGGG), 985-1085 (EMES…LARL), and 1097-1308 (RLAS…PGAR). A Phosphoserine modification is found at S441. Polar residues predominate over residues 485–496 (PSRQACSSQPAQ). S541 is modified (phosphoserine). Basic and acidic residues-rich tracts occupy residues 541-555 (SKEWVIIDKETELKD) and 574-589 (ELRPLPEEGEERRRLG). A compositionally biased stretch (low complexity) spans 638-647 (SPSHSPLHSG). A compositionally biased stretch (acidic residues) spans 735–769 (GEEEEEEEEEEEEEEEEEEEEEEEEEEEEEEEEEA). A compositionally biased stretch (basic and acidic residues) spans 786–795 (GSERSTERSQ). Polar residues-rich tracts occupy residues 868 to 885 (PTGSQLDVSEPGTLSSIL) and 1020 to 1035 (ASQQEPVTKKGTTISP). The segment covering 1097–1107 (RLASGASSSSS) has biased composition (low complexity).

This sequence belongs to the protein kinase superfamily. CK1 Ser/Thr protein kinase family. Mg(2+) serves as cofactor. The cofactor is Mn(2+). Expressed in the brain. Strong expression in the cortical layers, the CA1 layers of the hippocampus and the granular layer of the cerebellum. Also expressed in the large cortical pyramidal cells in the temporal cortex, the CA1 pyramidal neurons and the cerebellum granular neurons.

It localises to the cytoplasm. The catalysed reaction is L-seryl-[protein] + ATP = O-phospho-L-seryl-[protein] + ADP + H(+). The enzyme catalyses L-threonyl-[protein] + ATP = O-phospho-L-threonyl-[protein] + ADP + H(+). Functionally, serine/threonine kinase which is able to phosphorylate TAU on serine, threonine and tyrosine residues. Induces aggregation of TAU. This chain is Tau-tubulin kinase 1 (Ttbk1), found in Mus musculus (Mouse).